The primary structure comprises 957 residues: Serine-aspartate repeat-containing protein C (957 aa).

A signal peptide spans 1-50; sequence MNNKKTVTNRKGMIPNRLNKFSIRKYSVGTASILVGTTLIFGLSGHEAKA. The disordered stretch occupies residues 51-166; that stretch reads AEHTNGELNQ…TPKTTTIKPR (116 aa). Residues 51–495 form a ligand binding A region region; that stretch reads AEHTNGELNQ…GSSTANGDQK (445 aa). Positions 56–71 are enriched in polar residues; the sequence is GELNQSKNETTAPSEN. A compositionally biased stretch (basic and acidic residues) spans 72–83; sequence KTTEKVDSRQLK. The segment covering 84–114 has biased composition (polar residues); the sequence is DNTQTATADQPKVTMSDSATVKETSSNMQSP. Residues 115–132 show a composition bias toward low complexity; it reads QNATASQSTTQTSNVTTN. Over residues 133–164 the composition is skewed to polar residues; it reads DKSSTTYSNETDKSNLTQAKDVSATPKTTTIK. 2 consecutive CNA-B domains span residues 496–606 and 607–717; these read KYNL…YKTP and KYSL…EEET. A disordered region spans residues 678–937; the sequence is TQTGTNTTED…NNSNNGTLFG (260 aa). Composition is skewed to acidic residues over residues 685–695 and 712–896; these read TEDDKDADGGE and YYEE…DSDS. The LPXTG sorting signal motif lies at 920 to 924; the sequence is LPETG. Over residues 922–937 the composition is skewed to low complexity; it reads ETGSENNNSNNGTLFG. Position 923 is a pentaglycyl murein peptidoglycan amidated threonine (Thr-923). The propeptide at 924-957 is removed by sortase; it reads GSENNNSNNGTLFGGLFAALGSLLLFGRRKKQNK.

The protein belongs to the serine-aspartate repeat-containing protein (SDr) family. Homodimerizes; via N2-Domain. Interacts with host NRXN1; this interaction mediates bacterial attachment to host cells.

The protein localises to the secreted. The protein resides in the cell wall. Functionally, cell surface-associated calcium-binding protein which plays an important role in adhesion and pathogenesis. Mediates interactions with components of the extracellular matrix such as host NRXN1 to promote bacterial adhesion. The sequence is that of Serine-aspartate repeat-containing protein C (sdrC) from Staphylococcus aureus (strain MSSA476).